Here is a 380-residue protein sequence, read N- to C-terminus: Cytochrome b (380 aa).

Transmembrane regions (helical) follow at residues 34–54 (FGSL…LLAM), 78–99 (WLIR…YLHI), 114–134 (WNIG…GYVL), and 179–199 (LFAL…VHLT). 2 residues coordinate heme b: His-84 and His-98. His-183 and His-197 together coordinate heme b. His-202 is an a ubiquinone binding site. The next 4 membrane-spanning stretches (helical) occupy residues 227–247 (IKDL…ALFA), 289–309 (LGGV…PLLH), 321–341 (LSQM…WVGS), and 348–368 (FIII…VLFP).

It belongs to the cytochrome b family. In terms of assembly, the cytochrome bc1 complex contains 11 subunits: 3 respiratory subunits (MT-CYB, CYC1 and UQCRFS1), 2 core proteins (UQCRC1 and UQCRC2) and 6 low-molecular weight proteins (UQCRH/QCR6, UQCRB/QCR7, UQCRQ/QCR8, UQCR10/QCR9, UQCR11/QCR10 and a cleavage product of UQCRFS1). This cytochrome bc1 complex then forms a dimer. Requires heme b as cofactor.

It is found in the mitochondrion inner membrane. Component of the ubiquinol-cytochrome c reductase complex (complex III or cytochrome b-c1 complex) that is part of the mitochondrial respiratory chain. The b-c1 complex mediates electron transfer from ubiquinol to cytochrome c. Contributes to the generation of a proton gradient across the mitochondrial membrane that is then used for ATP synthesis. In Aphelocoma coerulescens (Florida scrub-jay), this protein is Cytochrome b (MT-CYB).